A 621-amino-acid polypeptide reads, in one-letter code: Hemolysin ahh1 (621 aa).

The N-terminal stretch at 1–30 (MKNKKPRKFITQAPTLSLLALALLAGSVQA) is a signal peptide. One can recognise a Ricin B-type lectin domain in the interval 491–610 (RPVNLQLGGF…QNVSVRTLTS (120 aa)).

Belongs to the HlyA hemolysin family.

Functionally, bacterial hemolysins are exotoxins that attack blood cell membranes and cause cell rupture by mechanisms not clearly defined. This is Hemolysin ahh1 (ahh1) from Aeromonas hydrophila subsp. hydrophila (strain ATCC 7966 / DSM 30187 / BCRC 13018 / CCUG 14551 / JCM 1027 / KCTC 2358 / NCIMB 9240 / NCTC 8049).